Consider the following 336-residue polypeptide: Calcium uniporter regulatory subunit MCUb, mitochondrial (336 aa).

The transit peptide at 1–35 (MLQRGLWPWRTRLLPTPGTWRPARPWPLPPPPQVL) directs the protein to the mitochondrion. Residues 179-210 (ESQKKREHHLLEKIDHLKEQLQPLEQVKAGIE) adopt a coiled-coil conformation. A run of 2 helical transmembrane segments spans residues 220–240 (LLWAGLALLSIQGGALAWLTW) and 250–270 (PVTYFITFANSMVFFAYFIVT). The stretch at 297–323 (FDVQQYNKLKEDLAKAKESLKQARHSL) forms a coiled coil.

This sequence belongs to the MCU (TC 1.A.77) family. Homooligomer. Associates with the uniplex complex, composed of MCU, MICU1, MICU2 and EMRE/SMDT1, inhibiting its activity.

It localises to the mitochondrion inner membrane. Its function is as follows. Negative regulator of the mitochondrial calcium uniporter (MCU), a channel that mediates calcium uptake into the mitochondrial matrix. MCUB is required to limit mitochondrial calcium overload during stress. Acts as a dominant-negative regulator that displaces MCU from the functional uniplex complex and thereby decreases the association of calcium sensors MICU1 and MICU2, preventing channel gating. Mitochondrial calcium homeostasis plays key roles in mitochondrial metabolism. Acts as an important regulator of mitochondrial metabolism in response to stress in muscle cells: induced in response to fasting, leading to restrict mitochondrial calcium uptake, resulting in reprogramming of mitochondria toward fatty acid oxidation preference. Acts as a regulator of macrophage polarization during skeletal muscle regeneration: inhibition of mitochondrial calcium uptake drives differentiation of macrophages with anti-inflammatory profile, promoting the differentiation and fusion of satellite cells. The sequence is that of Calcium uniporter regulatory subunit MCUb, mitochondrial from Homo sapiens (Human).